Here is a 485-residue protein sequence, read N- to C-terminus: tRNA sulfurtransferase (485 aa).

The 105-residue stretch at 61–165 (EELIALLQRI…DDKMMLVKAR (105 aa)) folds into the THUMP domain. Residues 183 to 184 (LI), lysine 265, glycine 287, and glutamine 296 each bind ATP. Cysteine 344 and cysteine 456 form a disulfide bridge. Residues 404–483 (LGENEVILDI…FSNVRVFAKN (80 aa)) enclose the Rhodanese domain. The Cysteine persulfide intermediate role is filled by cysteine 456.

Belongs to the ThiI family.

It localises to the cytoplasm. The catalysed reaction is [ThiI sulfur-carrier protein]-S-sulfanyl-L-cysteine + a uridine in tRNA + 2 reduced [2Fe-2S]-[ferredoxin] + ATP + H(+) = [ThiI sulfur-carrier protein]-L-cysteine + a 4-thiouridine in tRNA + 2 oxidized [2Fe-2S]-[ferredoxin] + AMP + diphosphate. It catalyses the reaction [ThiS sulfur-carrier protein]-C-terminal Gly-Gly-AMP + S-sulfanyl-L-cysteinyl-[cysteine desulfurase] + AH2 = [ThiS sulfur-carrier protein]-C-terminal-Gly-aminoethanethioate + L-cysteinyl-[cysteine desulfurase] + A + AMP + 2 H(+). It functions in the pathway cofactor biosynthesis; thiamine diphosphate biosynthesis. In terms of biological role, catalyzes the ATP-dependent transfer of a sulfur to tRNA to produce 4-thiouridine in position 8 of tRNAs, which functions as a near-UV photosensor. Also catalyzes the transfer of sulfur to the sulfur carrier protein ThiS, forming ThiS-thiocarboxylate. This is a step in the synthesis of thiazole, in the thiamine biosynthesis pathway. The sulfur is donated as persulfide by IscS. This is tRNA sulfurtransferase from Haemophilus influenzae (strain PittGG).